An 857-amino-acid polypeptide reads, in one-letter code: A-kinase anchor protein 1, mitochondrial (857 aa).

A mitochondrion-targeting transit peptide spans 1–29; that stretch reads MAIQLRSLFPLALPGMLALLGWWWFFSRK. At serine 55 the chain carries Phosphoserine. The disordered stretch occupies residues 65–121; that stretch reads VAPTVTQPPGREEQRCVDKPSTEPLALPRTRQVRRRSESSGNLPSVADTRSQPGPCR. The span at 74–85 shows a compositional bias: basic and acidic residues; the sequence is GREEQRCVDKPS. Serine 101, serine 103, and serine 164 each carry phosphoserine. A compositionally biased stretch (polar residues) spans 103-116; the sequence is SSGNLPSVADTRSQ. Disordered regions lie at residues 165 to 198 and 260 to 303; these read ALGKTPGRGWPSPYAASGEKARETGGTEGTGDAV and FVEP…VPEN. Residues 286–299 are compositionally biased toward basic and acidic residues; sequence SDRDLAGELDKDET. Residues 306-319 are PKA-RII subunit binding domain; sequence IKQAAFQLISQVIL. Disordered stretches follow at residues 336–437, 466–497, and 512–554; these read QVHP…NPRG, STSGLEDSCTETISSSGDKAMTPPLPVSTQPF, and EDGW…QAGS. Residues 354–379 are compositionally biased toward polar residues; that stretch reads PASQETSLGQDTSDPASTRTGATASP. Threonine 401 carries the phosphothreonine modification. Residues 466 to 482 show a composition bias toward polar residues; sequence STSGLEDSCTETISSSG. At threonine 487 the chain carries Phosphothreonine. 2 positions are modified to phosphoserine: serine 527 and serine 546. The segment covering 545 to 554 has biased composition (polar residues); that stretch reads DSPQSVQAGS. The region spanning 561–625 is the KH domain; it reads LIIWEIEVPK…HHVDKALNLI (65 aa). In terms of domain architecture, Tudor spans 712–771; sequence PVEITVICAAPGADGAWWRAQVVASYEETNEVEIRYVDYGGYKRVKVDVLRQIRSDFVTL.

In terms of assembly, interacts with SLC8A3. Interacts with CFAP91. Interacts with CLPB. Interacts with NDUFS1. In terms of tissue distribution, highest expression in testis, heart, liver, skeletal muscle, intestine and kidney, followed by brain and lung. No expression in spleen. Isoform 1/D-AKAP1A is expressed predominantly in testis whereas isoform 4/D-AKAP1D is expressed primarily in liver. Expression is decreased in hearts of diabetic mice (at protein level).

It localises to the mitochondrion outer membrane. The protein resides in the mitochondrion. The protein localises to the endoplasmic reticulum. Its function is as follows. Differentially targeted protein that binds to type I and II regulatory subunits of protein kinase A. Anchors them to the cytoplasmic face of the mitochondrial outer membrane or allows them to reside in the endoplasmic reticulum. Involved in mitochondrial-mediated antiviral innate immunity. Promotes translocation of NDUFS1 into mitochondria to regulate mitochondrial membrane respiratory chain NADH dehydrogenase (Complex I) activity. Under diabetic conditions, myocardial AKAP1 expression decreases which blocks the translocation of NDUFS1 from the cytosol to mitochondria. Reduction of NDUFS1 in mitochondria decreases ATP production and increases mitochondrial ROS level, which causes mitochondrial dysfunction and cell apoptosis, respectively, thereby leading to cardiac dysfunction. The polypeptide is A-kinase anchor protein 1, mitochondrial (Mus musculus (Mouse)).